The primary structure comprises 60 residues: UPF0434 protein CKO_02153 (60 aa).

This sequence belongs to the UPF0434 family.

This chain is UPF0434 protein CKO_02153, found in Citrobacter koseri (strain ATCC BAA-895 / CDC 4225-83 / SGSC4696).